A 226-amino-acid chain; its full sequence is Glutathione S-transferase kappa 1 (226 aa).

Glutathione contacts are provided by residues 15-17 (SPY), N53, and 199-200 (SD).

Belongs to the GST superfamily. Kappa family.

It carries out the reaction RX + glutathione = an S-substituted glutathione + a halide anion + H(+). The polypeptide is Glutathione S-transferase kappa 1 (gstk-1) (Caenorhabditis elegans).